The primary structure comprises 487 residues: b(0,+)-type amino acid transporter 1 (487 aa).

The segment at 1-22 is disordered; that stretch reads MGETVPRRRREDEKSIQSDEPK. Residues 1–31 lie on the Cytoplasmic side of the membrane; sequence MGETVPRRRREDEKSIQSDEPKTTSLQKEVG. The residue at position 18 (serine 18) is a Phosphoserine. A helical membrane pass occupies residues 32-55; that stretch reads LISGICIIVGTIIGSGIFISPKSV. Residue 43-47 participates in L-arginine binding; sequence IIGSG. At 56 to 62 the chain is on the extracellular side; it reads LSNTQAV. A helical membrane pass occupies residues 63–84; that stretch reads GPCLIIWAACGVLGTLGALCFA. The Cytoplasmic segment spans residues 85–110; sequence ELGTMITKSGGEYPYLMEAFGPIPAY. A helical transmembrane segment spans residues 111–137; that stretch reads LFSWSSLLVMKPSSFAIICLSFSEYVA. The Extracellular portion of the chain corresponds to 138–147; sequence TPFYSGCEPP. Transmembrane regions (helical) follow at residues 148–169 and 170–193; these read KVVV…NSLS and VRLG…IIII. The Extracellular segment spans residues 194–217; the sequence is SGLVLLAQGNTKNFENSFEGAEVS. The helical transmembrane segment at 218–238 threads the bilayer; that stretch reads VGAISLALYNGLWAYDGWNQL. Aspartate 233 serves as a coordination point for L-arginine. Topologically, residues 239–251 are cytoplasmic; it reads NYITEELRNPFRN. The chain crosses the membrane as a helical span at residues 252–274; that stretch reads LPLAIIFGIPLVTVCYILINISY. Residues 275–302 are Extracellular-facing; sequence FTVMTPTELLQSQAVAVTFGDRVLYPAS. The chain crosses the membrane as a helical span at residues 303 to 325; sequence WIVPVFVAFSTIGAANGTCFTAG. Residues 326 to 351 lie on the Cytoplasmic side of the membrane; sequence RLVYVAGREGHMLKVLSYISVRRLTP. 2 helical membrane-spanning segments follow: residues 352 to 370 and 371 to 391; these read APAI…IPGD and INSL…LTIL. Residues 392–410 are Cytoplasmic-facing; it reads GLIVMRFTRKELERPIKVP. Residues 411-431 form a helical membrane-spanning segment; the sequence is IFIPILVTFIAAFLVLAPVIT. The Extracellular portion of the chain corresponds to 432–434; the sequence is NPA. Residues 435–450 traverse the membrane as a helical segment; it reads WEYLYCVLFILSGLVF. Residues 451–487 are Cytoplasmic-facing; the sequence is YFLFVYYKFEWAQKISKPITMHLQMLMEVVPPEPDPK.

This sequence belongs to the amino acid-polyamine-organocation (APC) superfamily. In terms of assembly, disulfide-linked heterodimer composed of the catalytic light chain subunit SLC7A9 and the heavy chain subunit. The heterodimer is the minimal functional unit. Assembles in heterotetramers (dimers of heterodimers) and higher order oligomers. Interacts with CAV1. As to expression, kidney and small intestine.

The protein resides in the apical cell membrane. It carries out the reaction L-leucine(out) + L-arginine(in) = L-leucine(in) + L-arginine(out). The enzyme catalyses L-histidine(out) + L-arginine(in) = L-histidine(in) + L-arginine(out). It catalyses the reaction L-arginine(in) + L-phenylalanine(out) = L-arginine(out) + L-phenylalanine(in). The catalysed reaction is L-cysteine(out) + L-arginine(in) = L-cysteine(in) + L-arginine(out). It carries out the reaction L-cystine(out) + L-arginine(in) = L-cystine(in) + L-arginine(out). The enzyme catalyses L-lysine(out) + L-arginine(in) = L-lysine(in) + L-arginine(out). In terms of biological role, mediates the electrogenic exchange between cationic amino acids and neutral amino acids, with a stoichiometry of 1:1. Has system b(0,+)-like activity with high affinity for extracellular cationic amino acids and L-cystine and lower affinity for intracellular neutral amino acids. Substrate exchange is driven by high concentration of intracellular neutral amino acids and the intracellular reduction of L-cystine to L-cysteine. Required for reabsorption of L-cystine and dibasic amino acids across the brush border membrane in renal proximal tubules. The chain is b(0,+)-type amino acid transporter 1 from Oryctolagus cuniculus (Rabbit).